We begin with the raw amino-acid sequence, 218 residues long: Probable nicotinate-nucleotide adenylyltransferase (218 aa).

It belongs to the NadD family.

It catalyses the reaction nicotinate beta-D-ribonucleotide + ATP + H(+) = deamido-NAD(+) + diphosphate. It participates in cofactor biosynthesis; NAD(+) biosynthesis; deamido-NAD(+) from nicotinate D-ribonucleotide: step 1/1. Its function is as follows. Catalyzes the reversible adenylation of nicotinate mononucleotide (NaMN) to nicotinic acid adenine dinucleotide (NaAD). The protein is Probable nicotinate-nucleotide adenylyltransferase of Burkholderia lata (strain ATCC 17760 / DSM 23089 / LMG 22485 / NCIMB 9086 / R18194 / 383).